The sequence spans 514 residues: RNA polymerase I-specific transcription initiation factor RRN7 (514 aa).

An RRN7-type zinc finger spans residues 3–36 (TFIRGPICGTDNCPSRLWRIIDGRRTCQYGHVME). Zn(2+) contacts are provided by cysteine 10, cysteine 15, cysteine 29, and histidine 33. The B-reader stretch occupies residues 37-66 (GDVEFNDDEDDLNGLGAGVITRRLNLTTNA). Positions 67–101 (TGSFQSSQLTNSQLLQQQQRQSHKKFKKLIGHEAK) are B-linker. Residues 102–210 (LLFLKSFQFI…KSWRIQLPNY (109 aa)) form an N-terminal cyclin fold region. The interval 211–320 (YVSILEGSIS…MLTINWMLSF (110 aa)) is C-terminal cyclin fold.

Belongs to the RRN7/TAF1B family. Component of the core factor (CF) complex, which consists of RRN6, RRN7 and RRN11. The CF heterotrimer may further dimerize to form a hexamer. RRN7 interacts with RRN6, RRN11, SPT15 and RRN9.

The protein localises to the nucleus. Its subcellular location is the nucleolus. In terms of biological role, component of RNA polymerase I core factor complex (CF) that acts as a SUA7/TFIIB-like factor and plays a key role in multiple steps during transcription initiation such as pre-initiation complex (PIC) assembly and postpolymerase recruitment events in polymerase I (Pol I) transcription. Binds rDNA promoters and plays a role in Pol I recruitment. After binding of UAF (upstream activation factor) to an upstream element of the promoter, CF is recruited in a SPT15/TBP-dependent manner to form a pre-initiation complex. The chain is RNA polymerase I-specific transcription initiation factor RRN7 (RRN7) from Saccharomyces cerevisiae (strain ATCC 204508 / S288c) (Baker's yeast).